The primary structure comprises 70 residues: DNA gyrase inhibitor YacG (70 aa).

Zn(2+) is bound by residues Cys21, Cys24, Cys36, and Cys40.

It belongs to the DNA gyrase inhibitor YacG family. Interacts with GyrB. Zn(2+) serves as cofactor.

Functionally, inhibits all the catalytic activities of DNA gyrase by preventing its interaction with DNA. Acts by binding directly to the C-terminal domain of GyrB, which probably disrupts DNA binding by the gyrase. The chain is DNA gyrase inhibitor YacG from Sinorhizobium medicae (strain WSM419) (Ensifer medicae).